The following is a 360-amino-acid chain: Photosystem II protein D1 3 (360 aa).

3 helical membrane-spanning segments follow: residues 29–46, 118–133, and 142–156; these read YVGWFGVLLIPTALTAAI, HFLIAIYAYMGRQWEL, and WIPVAFSAPVAAATA. His118 provides a ligand contact to chlorophyll a. Residue Tyr126 coordinates pheophytin a. The [CaMn4O5] cluster site is built by Asp170 and Glu189. Residues 197–218 form a helical membrane-spanning segment; that stretch reads FHMIGVAGVFGGALFSAMHGSL. Chlorophyll a is bound at residue His198. Residues His215 and 264-265 each bind a quinone; that span reads SF. His215 is a binding site for Fe cation. His272 provides a ligand contact to Fe cation. A helical membrane pass occupies residues 274 to 288; sequence FLAAWPVIGIWFAAL. [CaMn4O5] cluster is bound by residues His332, Glu333, Asp342, and Ala344. Residues 345–360 constitute a propeptide that is removed on maturation; the sequence is SGEVQPIALTAPAIAS.

It belongs to the reaction center PufL/M/PsbA/D family. As to quaternary structure, PSII is composed of 1 copy each of membrane proteins PsbA, PsbB, PsbC, PsbD, PsbE, PsbF, PsbH, PsbI, PsbJ, PsbK, PsbL, PsbM, PsbT, PsbX, PsbY, PsbZ, Psb30/Ycf12, peripheral proteins PsbO, CyanoQ (PsbQ), PsbU, PsbV and a large number of cofactors. It forms dimeric complexes. It depends on The D1/D2 heterodimer binds P680, chlorophylls that are the primary electron donor of PSII, and subsequent electron acceptors. It shares a non-heme iron and each subunit binds pheophytin, quinone, additional chlorophylls, carotenoids and lipids. D1 provides most of the ligands for the Mn4-Ca-O5 cluster of the oxygen-evolving complex (OEC). There is also a Cl(-1) ion associated with D1 and D2, which is required for oxygen evolution. The PSII complex binds additional chlorophylls, carotenoids and specific lipids. as a cofactor. In terms of processing, tyr-161 forms a radical intermediate that is referred to as redox-active TyrZ, YZ or Y-Z. Post-translationally, C-terminally processed by CtpA; processing is essential to allow assembly of the oxygen-evolving complex and thus photosynthetic growth.

The protein localises to the cellular thylakoid membrane. The enzyme catalyses 2 a plastoquinone + 4 hnu + 2 H2O = 2 a plastoquinol + O2. Photosystem II (PSII) is a light-driven water:plastoquinone oxidoreductase that uses light energy to abstract electrons from H(2)O, generating O(2) and a proton gradient subsequently used for ATP formation. It consists of a core antenna complex that captures photons, and an electron transfer chain that converts photonic excitation into a charge separation. The D1/D2 (PsbA/PsbD) reaction center heterodimer binds P680, the primary electron donor of PSII as well as several subsequent electron acceptors. This Nostoc sp. (strain PCC 7120 / SAG 25.82 / UTEX 2576) protein is Photosystem II protein D1 3.